Consider the following 273-residue polypeptide: Light-independent protochlorophyllide reductase iron-sulfur ATP-binding protein (273 aa).

ATP contacts are provided by residues 12 to 17 (GIGKST) and lysine 41. Position 16 (serine 16) interacts with Mg(2+). [4Fe-4S] cluster contacts are provided by cysteine 97 and cysteine 131. ATP is bound at residue 182–183 (NR).

This sequence belongs to the NifH/BchL/ChlL family. As to quaternary structure, homodimer. Protochlorophyllide reductase is composed of three subunits; BchL, BchN and BchB. It depends on [4Fe-4S] cluster as a cofactor.

The catalysed reaction is chlorophyllide a + oxidized 2[4Fe-4S]-[ferredoxin] + 2 ADP + 2 phosphate = protochlorophyllide a + reduced 2[4Fe-4S]-[ferredoxin] + 2 ATP + 2 H2O. It participates in porphyrin-containing compound metabolism; bacteriochlorophyll biosynthesis (light-independent). Component of the dark-operative protochlorophyllide reductase (DPOR) that uses Mg-ATP and reduced ferredoxin to reduce ring D of protochlorophyllide (Pchlide) to form chlorophyllide a (Chlide). This reaction is light-independent. The L component serves as a unique electron donor to the NB-component of the complex, and binds Mg-ATP. The sequence is that of Light-independent protochlorophyllide reductase iron-sulfur ATP-binding protein from Roseiflexus sp. (strain RS-1).